Reading from the N-terminus, the 118-residue chain is GRB2-related adapter protein-like (118 aa).

The 58-residue stretch at Met-1 to His-58 folds into the SH3 domain. Positions Trp-60 to Gly-118 constitute an SH2 domain. The tract at residues Glu-89 to Gly-118 is disordered. The segment covering Ser-90–Ala-103 has biased composition (polar residues).

The protein belongs to the GRB2/sem-5/DRK family.

The chain is GRB2-related adapter protein-like (GRAPL) from Homo sapiens (Human).